Reading from the N-terminus, the 178-residue chain is ATP synthase subunit delta (178 aa).

Belongs to the ATPase delta chain family. F-type ATPases have 2 components, F(1) - the catalytic core - and F(0) - the membrane proton channel. F(1) has five subunits: alpha(3), beta(3), gamma(1), delta(1), epsilon(1). F(0) has three main subunits: a(1), b(2) and c(10-14). The alpha and beta chains form an alternating ring which encloses part of the gamma chain. F(1) is attached to F(0) by a central stalk formed by the gamma and epsilon chains, while a peripheral stalk is formed by the delta and b chains.

It localises to the cell inner membrane. F(1)F(0) ATP synthase produces ATP from ADP in the presence of a proton or sodium gradient. F-type ATPases consist of two structural domains, F(1) containing the extramembraneous catalytic core and F(0) containing the membrane proton channel, linked together by a central stalk and a peripheral stalk. During catalysis, ATP synthesis in the catalytic domain of F(1) is coupled via a rotary mechanism of the central stalk subunits to proton translocation. Functionally, this protein is part of the stalk that links CF(0) to CF(1). It either transmits conformational changes from CF(0) to CF(1) or is implicated in proton conduction. The sequence is that of ATP synthase subunit delta from Pseudomonas entomophila (strain L48).